A 399-amino-acid polypeptide reads, in one-letter code: MIKNQSQAGRYGDFGGQYVPETLMTELQRLDRAFQHYRQDAHFQEELTDLLNNYANRPSLLYHAQRLSDQLGGAQIYFKREDLNHTGAHKINNVLGQALLAKKMGKKRLIAETGAGQHGVATATIAALFGMECDVFMGKKDTNRQALNVYRMQLLGAKVHPVTTGSMVLKDAINAALQEWTRRCDDTAYIMGSATGPHPFPMMVHEFQSVISVEARQQILDQTGHLPDAVVACVGGGSNAIGSFAAFLDDTSVELIGCEAAGKGVQTPLTAATIERGRTGIFHGMKSLFLQDKAGQIAPVYSISAGLDYPGVGPEHAYLAASGRAQYVGINDDQAVQAFELIAKVEGVICAIESAHAVAYVQQLAPTMRRDQTIICTLSGRGDKDVAAIAKYRGVTIDD.

K90 is modified (N6-(pyridoxal phosphate)lysine).

The protein belongs to the TrpB family. In terms of assembly, tetramer of two alpha and two beta chains. The cofactor is pyridoxal 5'-phosphate.

It carries out the reaction (1S,2R)-1-C-(indol-3-yl)glycerol 3-phosphate + L-serine = D-glyceraldehyde 3-phosphate + L-tryptophan + H2O. The protein operates within amino-acid biosynthesis; L-tryptophan biosynthesis; L-tryptophan from chorismate: step 5/5. In terms of biological role, the beta subunit is responsible for the synthesis of L-tryptophan from indole and L-serine. The chain is Tryptophan synthase beta chain from Lactiplantibacillus plantarum (strain ATCC BAA-793 / NCIMB 8826 / WCFS1) (Lactobacillus plantarum).